The primary structure comprises 339 residues: NmrA-like family domain-containing oxidoreductase notA (339 aa).

NADP(+)-binding positions include 13 to 18 (GATGAQ), 39 to 43 (RKPDS), 60 to 61 (DG), 81 to 83 (TNS), Lys-140, and 164 to 167 (YMGI).

The protein belongs to the NmrA-type oxidoreductase family.

NmrA-like family domain-containing oxidoreductase; part of the gene cluster that mediates the biosynthesis of notoamide, a fungal indole alkaloid that belongs to a family of natural products containing a characteristic bicyclo[2.2.2]diazaoctane core. The first step of notoamide biosynthesis involves coupling of L-proline and L-tryptophan by the bimodular NRPS notE, to produce cyclo-L-tryptophan-L-proline called brevianamide F. The reverse prenyltransferase notF then acts as a deoxybrevianamide E synthase and converts brevianamide F to deoxybrevianamide E via reverse prenylation at C-2 of the indole ring leading to the bicyclo[2.2.2]diazaoctane core. Deoxybrevianamide E is further hydroxylated at C-6 of the indole ring, likely catalyzed by the cytochrome P450 monooxygenase notG, to yield 6-hydroxy-deoxybrevianamide E. 6-hydroxy-deoxybrevianamide E is a specific substrate of the prenyltransferase notC for normal prenylation at C-7 to produce 6-hydroxy-7-prenyl-deoxybrevianamide, also called notoamide S. As the proposed pivotal branching point in notoamide biosynthesis, notoamide S can be diverted to notoamide E through an oxidative pyran ring closure putatively catalyzed by either notH cytochrome P450 monooxygenase or the notD FAD-linked oxidoreductase. This step would be followed by an indole 2,3-epoxidation-initiated pinacol-like rearrangement catalyzed by the notB FAD-dependent monooxygenase leading to the formation of notoamide C and notoamide D. On the other hand notoamide S is converted to notoamide T by notH (or notD), a bifunctional oxidase that also functions as the intramolecular Diels-Alderase responsible for generation of (+)-notoamide T. To generate antipodal (-)-notoaminide T, notH' (or notD') in Aspergillus versicolor is expected to catalyze a Diels-Alder reaction leading to the opposite stereochemistry. The remaining oxidoreductase notD (or notH) likely catalyzes the oxidative pyran ring formation to yield (+)-stephacidin A. The FAD-dependent monooxygenase notI is highly similar to notB and is predicted to catalyze a similar conversion from (+)-stephacidin A to (-)-notoamide B via the 2,3-epoxidation of (+)-stephacidin A followed by a pinacol-type rearrangement. Finally, it remains unclear which enzyme could be responsible for the final hydroxylation steps leading to notoamide A and sclerotiamide. This chain is NmrA-like family domain-containing oxidoreductase notA, found in Aspergillus sp. (strain MF297-2).